We begin with the raw amino-acid sequence, 319 residues long: Putative GPI-anchor transamidase (319 aa).

The signal sequence occupies residues 1–16 (MRHVLLIFCAIIATEA). Active-site residues include His-156 and Cys-198. The N-linked (GlcNAc...) asparagine glycan is linked to Asn-257.

It belongs to the peptidase C13 family.

Its pathway is glycolipid biosynthesis; glycosylphosphatidylinositol-anchor biosynthesis. In terms of biological role, mediates GPI anchoring in the endoplasmic reticulum, by replacing a protein's C-terminal GPI attachment signal peptide with a pre-assembled GPI. During this transamidation reaction, the GPI transamidase forms a carbonyl intermediate with the substrate protein. In Caenorhabditis elegans, this protein is Putative GPI-anchor transamidase.